We begin with the raw amino-acid sequence, 306 residues long: Dermonecrotic toxin LiSicTox-alphaIA2bi (306 aa).

The first 18 residues, 1-18, serve as a signal peptide directing secretion; the sequence is MLPYIALILVCWSVLSQA. Positions 19 to 26 are excised as a propeptide; sequence AQTDVEGR. H38 is an active-site residue. Mg(2+)-binding residues include E58 and D60. H74 serves as the catalytic Nucleophile. Intrachain disulfides connect C78/C84 and C80/C223. D118 contacts Mg(2+). A glycan (N-linked (GlcNAc...) asparagine) is linked at N283.

Belongs to the arthropod phospholipase D family. Class II subfamily. The cofactor is Mg(2+). Expressed by the venom gland.

The protein localises to the secreted. It carries out the reaction an N-(acyl)-sphingosylphosphocholine = an N-(acyl)-sphingosyl-1,3-cyclic phosphate + choline. The catalysed reaction is an N-(acyl)-sphingosylphosphoethanolamine = an N-(acyl)-sphingosyl-1,3-cyclic phosphate + ethanolamine. The enzyme catalyses a 1-acyl-sn-glycero-3-phosphocholine = a 1-acyl-sn-glycero-2,3-cyclic phosphate + choline. It catalyses the reaction a 1-acyl-sn-glycero-3-phosphoethanolamine = a 1-acyl-sn-glycero-2,3-cyclic phosphate + ethanolamine. In terms of biological role, dermonecrotic toxins cleave the phosphodiester linkage between the phosphate and headgroup of certain phospholipids (sphingolipid and lysolipid substrates), forming an alcohol (often choline) and a cyclic phosphate. This toxin acts on sphingomyelin (SM). It may also act on ceramide phosphoethanolamine (CPE), lysophosphatidylcholine (LPC) and lysophosphatidylethanolamine (LPE), but not on lysophosphatidylserine (LPS), and lysophosphatidylglycerol (LPG). It acts by transphosphatidylation, releasing exclusively cyclic phosphate products as second products. Induces dermonecrosis, hemolysis, increased vascular permeability, edema, inflammatory response, and platelet aggregation. This chain is Dermonecrotic toxin LiSicTox-alphaIA2bi, found in Loxosceles intermedia (Brown spider).